Reading from the N-terminus, the 228-residue chain is Ribose-5-phosphate isomerase A (228 aa).

Substrate-binding positions include 32–35 (TGST), 85–88 (DGAD), and 98–101 (KGGG). The active-site Proton acceptor is Glu-107. Lys-125 is a binding site for substrate.

The protein belongs to the ribose 5-phosphate isomerase family. As to quaternary structure, homodimer.

It catalyses the reaction aldehydo-D-ribose 5-phosphate = D-ribulose 5-phosphate. It functions in the pathway carbohydrate degradation; pentose phosphate pathway; D-ribose 5-phosphate from D-ribulose 5-phosphate (non-oxidative stage): step 1/1. Catalyzes the reversible conversion of ribose-5-phosphate to ribulose 5-phosphate. In Cupriavidus pinatubonensis (strain JMP 134 / LMG 1197) (Cupriavidus necator (strain JMP 134)), this protein is Ribose-5-phosphate isomerase A.